We begin with the raw amino-acid sequence, 505 residues long: ATP synthase subunit alpha (505 aa).

An ATP-binding site is contributed by glycine 171–threonine 178.

Belongs to the ATPase alpha/beta chains family. F-type ATPases have 2 components, CF(1) - the catalytic core - and CF(0) - the membrane proton channel. CF(1) has five subunits: alpha(3), beta(3), gamma(1), delta(1), epsilon(1). CF(0) has three main subunits: a(1), b(2) and c(9-12). The alpha and beta chains form an alternating ring which encloses part of the gamma chain. CF(1) is attached to CF(0) by a central stalk formed by the gamma and epsilon chains, while a peripheral stalk is formed by the delta and b chains.

It is found in the cell inner membrane. It carries out the reaction ATP + H2O + 4 H(+)(in) = ADP + phosphate + 5 H(+)(out). Produces ATP from ADP in the presence of a proton gradient across the membrane. The alpha chain is a regulatory subunit. The chain is ATP synthase subunit alpha from Campylobacter concisus (strain 13826).